The chain runs to 357 residues: Peptide chain release factor 1 (357 aa).

Residue Q234 is modified to N5-methylglutamine.

This sequence belongs to the prokaryotic/mitochondrial release factor family. Methylated by PrmC. Methylation increases the termination efficiency of RF1.

The protein localises to the cytoplasm. Functionally, peptide chain release factor 1 directs the termination of translation in response to the peptide chain termination codons UAG and UAA. The sequence is that of Peptide chain release factor 1 from Lactococcus lactis subsp. cremoris (strain SK11).